Here is a 65-residue protein sequence, read N- to C-terminus: Bucain (65 aa).

4 cysteine pairs are disulfide-bonded: Cys-3–Cys-24, Cys-17–Cys-42, Cys-46–Cys-57, and Cys-58–Cys-63.

The protein belongs to the three-finger toxin family. Short-chain subfamily. Orphan group III sub-subfamily. In terms of tissue distribution, expressed by the venom gland.

It is found in the secreted. The protein is Bucain of Bungarus candidus (Malayan krait).